Reading from the N-terminus, the 150-residue chain is Ribosome maturation factor RimP (150 aa).

Belongs to the RimP family.

The protein resides in the cytoplasm. Required for maturation of 30S ribosomal subunits. The sequence is that of Ribosome maturation factor RimP from Thermotoga neapolitana (strain ATCC 49049 / DSM 4359 / NBRC 107923 / NS-E).